Reading from the N-terminus, the 734-residue chain is MALRSPKSSRGLSQDPTTRRIWFGIATAHDFESHDGMTEERLYQNIFASHLGQLAIIFLWTSGNLFHVAWQGNSEARIKDPLHVRPIAHAIWDPHFGQPAVEAFARGGGLGPVNIAYPGVYQRWYTIGMRTDQDLYTGAFSLLIVSTLFLVAGWLHLEPKWAPSISWFKNAESRLNHHLSGLFGVSSLARAGHLVHVAIPESRGGHVRWGNLLSASPHPQGLGPLSAGQWGVYARDVDSSSHLFNTSQGAGTAIPTFTGGFHPQTQSPWLTDIAHHHLAIAVVFIIAGHTYRTNFGIGHSIGGALEAHIPPGGRLGRGHQGLYDTINNSLHFQLGLALASLGVVTSLVAQHMYSLPAYAFIAQDFTTQAALYTHHQYIAGFIMTGAFAHGAIFLTRDYSPERGRGNVLARVLEHKEAIISHLSWASLFLGFHTLGLYVHNDVMLAFGTPEKQILIEPVFAQWIQSAHGKASYGFDVLLSSPNDPAFNAGRSIWLPGRLDAIDNNSNSLFLTIGPGDFPVHHAIASGLHTTTLILSKGALDARGSKLMPDKKEFGYGFPCDGPGRGGTCDISAWDAFYPAVFWMLNTIGWVTLHWHWKHITLWQGNVAQLDESSTYLMGWSRDYSWLNSSQLINGYNPFGTNSLSVWAWMFSFGHLVWATGFMFLIPRRGYWQELIETLARAHERTPLANLVRWGDKPVALSIVQARLVGLAHFSVGYIFTYAAFPIPSTAGKFG.

A run of 8 helical transmembrane segments spans residues 46-69 (IFAS…FHVA), 135-158 (LYTG…LHLE), 175-199 (LNHH…HVAI), 273-291 (IAHH…GHTY), 330-353 (LHFQ…QHMY), 369-395 (AALY…IFLT), 417-439 (AIIS…LYVH), and 517-535 (FPVH…LILS). [4Fe-4S] cluster contacts are provided by cysteine 559 and cysteine 568. A run of 2 helical transmembrane segments spans residues 575 to 596 (AFYP…HWHW) and 643 to 665 (LSVW…MFLI). 3 residues coordinate chlorophyll a: histidine 654, methionine 662, and tyrosine 670. Position 671 (tryptophan 671) interacts with phylloquinone. Residues 707-727 (LVGLAHFSVGYIFTYAAFPIP) form a helical membrane-spanning segment.

It belongs to the PsaA/PsaB family. The PsaA/B heterodimer binds the P700 chlorophyll special pair and subsequent electron acceptors. PSI consists of a core antenna complex that captures photons, and an electron transfer chain that converts photonic excitation into a charge separation. The eukaryotic PSI reaction center is composed of at least 11 subunits. The cofactor is P700 is a chlorophyll a/chlorophyll a' dimer, A0 is one or more chlorophyll a, A1 is one or both phylloquinones and FX is a shared 4Fe-4S iron-sulfur center..

It is found in the plastid. The protein resides in the chloroplast thylakoid membrane. The enzyme catalyses reduced [plastocyanin] + hnu + oxidized [2Fe-2S]-[ferredoxin] = oxidized [plastocyanin] + reduced [2Fe-2S]-[ferredoxin]. Functionally, psaA and PsaB bind P700, the primary electron donor of photosystem I (PSI), as well as the electron acceptors A0, A1 and FX. PSI is a plastocyanin-ferredoxin oxidoreductase, converting photonic excitation into a charge separation, which transfers an electron from the donor P700 chlorophyll pair to the spectroscopically characterized acceptors A0, A1, FX, FA and FB in turn. Oxidized P700 is reduced on the lumenal side of the thylakoid membrane by plastocyanin. The protein is Photosystem I P700 chlorophyll a apoprotein A2 of Selaginella uncinata (Blue spike-moss).